The sequence spans 298 residues: Ribosomal protein L11 methyltransferase (298 aa).

S-adenosyl-L-methionine contacts are provided by T139, G163, D185, and N232.

Belongs to the methyltransferase superfamily. PrmA family.

It is found in the cytoplasm. It carries out the reaction L-lysyl-[protein] + 3 S-adenosyl-L-methionine = N(6),N(6),N(6)-trimethyl-L-lysyl-[protein] + 3 S-adenosyl-L-homocysteine + 3 H(+). Methylates ribosomal protein L11. The protein is Ribosomal protein L11 methyltransferase of Gloeothece citriformis (strain PCC 7424) (Cyanothece sp. (strain PCC 7424)).